The sequence spans 393 residues: F-box protein KIB4 (393 aa).

One can recognise an F-box domain in the interval 12–59; the sequence is AKQPILVLDLVRLVLERLSFVDFHRARCVSSVWYSASKSCIGGTNPTA.

It is found in the cytoplasm. The protein resides in the nucleus. Its subcellular location is the nucleolus. Component of SCF(ASK-cullin-F-box) E3 ubiquitin ligase complexes, which may mediate the ubiquitination and subsequent proteasomal degradation of target proteins. Required for brassinosteroid (BR) signal transduction. Mediates ASK7/BIN2/SK21 inactivation both by competing with substrate binding (e.g. BZR1) and by promoting its ubiquitination and subsequent proteasomal degradation. The sequence is that of F-box protein KIB4 from Arabidopsis thaliana (Mouse-ear cress).